The sequence spans 698 residues: Serotransferrin (698 aa).

A signal peptide spans 1 to 19 (MRFAVGALLACAALGLCLA). Transferrin-like domains follow at residues 25 to 347 (VKWC…NQRE) and 360 to 683 (VKWC…NIRK). 2 disulfide bridges follow: Cys28–Cys67 and Cys38–Cys58. Dimethylated arginine is present on Arg42. Asp82 and Tyr114 together coordinate Fe(3+). 8 disulfides stabilise this stretch: Cys137-Cys213, Cys156-Cys350, Cys177-Cys193, Cys180-Cys196, Cys190-Cys198, Cys246-Cys260, Cys363-Cys395, and Cys373-Cys386. Thr139, Arg143, Ala145, and Gly146 together coordinate hydrogencarbonate. Tyr207 is a Fe(3+) binding site. Residue His268 participates in Fe(3+) binding. Ser388 carries the post-translational modification Phosphoserine. Asp410 and Tyr447 together coordinate Fe(3+). 8 disulfides stabilise this stretch: Cys420/Cys693, Cys435/Cys656, Cys471/Cys542, Cys495/Cys684, Cys505/Cys519, Cys516/Cys525, Cys582/Cys596, and Cys634/Cys639. Thr473, Arg477, Ala479, and Gly480 together coordinate hydrogencarbonate. N-linked (GlcNAc...) asparagine glycosylation is present at Asn512. Fe(3+) is bound at residue Tyr536. Position 604 (His604) interacts with Fe(3+). Residue Ser685 is modified to Phosphoserine.

The protein belongs to the transferrin family. In terms of assembly, monomer. Part of a complex composed of SLC40A1/ferroportin, TF/transferrin and HEPH/hephaestin that transfers iron from cells to transferrin. Expressed by the liver and secreted in plasma.

The protein resides in the secreted. Its function is as follows. Transferrins are iron binding transport proteins which can bind two Fe(3+) ions in association with the binding of an anion, usually bicarbonate. It is responsible for the transport of iron from sites of absorption and heme degradation to those of storage and utilization. Serum transferrin may also have a further role in stimulating cell proliferation. The protein is Serotransferrin (Tf) of Rattus norvegicus (Rat).